The chain runs to 344 residues: Serine proteinase inhibitor 2 (344 aa).

It belongs to the serpin family. Poxviruses subfamily.

It is found in the host cytoplasm. Functionally, viral serpin that inhibits both cysteine and serine proteinases involved in the regulation of host inflammatory and apoptosis processes. Major anti-apoptotic protein which inhibits both intrinsic and extrinsic pathways and strongly cleaves host CASP1 and CASP8 but is a rather poor inhibitor of host CASP3. Prevents the proteolytic activity of host interleukin-1-beta converting enzyme (ICE) and ICE-like enzymes. Can also block apoptosis through host tumor necrosis factor (TNF) receptor. The inhibition of host ICE is an example of a 'cross-class' interaction, in which a serpin inhibits a non-serine proteinase. Also inhibits granzyme B. This chain is Serine proteinase inhibitor 2 (OPG199), found in Cynomys gunnisoni (Gunnison's prairie dog).